We begin with the raw amino-acid sequence, 425 residues long: Receptor-like protein 55 (425 aa).

Residues 1–25 (MKPQQPQPPLLLLLLLPLLLTTVSS) form the signal peptide. Over 26-397 (YPLNPKQLKA…EEEHKGSNKT (372 aa)) the chain is Extracellular. N-linked (GlcNAc...) asparagine glycans are attached at residues Asn-40, Asn-54, Asn-79, and Asn-132. LRR repeat units follow at residues 144–169 (LKNL…ILGN), 170–193 (MHKL…SFHS), 195–216 (LRYI…ITRL), 217–240 (KNLK…IKSL), 242–264 (FLKN…LSSI), 265–287 (SELT…FFSE), and 288–313 (MKNL…SFIK). Asn-182, Asn-202, Asn-223, Asn-245, Asn-278, Asn-308, and Asn-329 each carry an N-linked (GlcNAc...) asparagine glycan. Residues 355–389 (PSQKEESLSGENDYDVEGGNEEKTENLKTKEEEEE) are disordered. A compositionally biased stretch (basic and acidic residues) spans 374 to 389 (NEEKTENLKTKEEEEE). Residue Asn-395 is glycosylated (N-linked (GlcNAc...) asparagine). The chain crosses the membrane as a helical span at residues 398-418 (LFGLGIGLFSLVFLILFLFYL). Residues 419–425 (AKRCRLI) lie on the Cytoplasmic side of the membrane.

This sequence belongs to the RLP family.

Its subcellular location is the cell membrane. Involved in plant defense. This chain is Receptor-like protein 55, found in Arabidopsis thaliana (Mouse-ear cress).